A 670-amino-acid polypeptide reads, in one-letter code: Transketolase, plasmid (670 aa).

Histidine 32 provides a ligand contact to substrate. Thiamine diphosphate contacts are provided by residues histidine 72 and 120 to 122 (GPL). Aspartate 161 is a binding site for Mg(2+). Glycine 162 and asparagine 191 together coordinate thiamine diphosphate. Asparagine 191 and isoleucine 193 together coordinate Mg(2+). Substrate contacts are provided by histidine 267, arginine 364, and serine 391. Histidine 267 provides a ligand contact to thiamine diphosphate. Glutamate 417 serves as the catalytic Proton donor. Residue phenylalanine 443 coordinates thiamine diphosphate. Substrate contacts are provided by histidine 467, aspartate 475, and arginine 526.

It belongs to the transketolase family. Homodimer. The cofactor is Mg(2+). It depends on Ca(2+) as a cofactor. Mn(2+) serves as cofactor. Co(2+) is required as a cofactor. Requires thiamine diphosphate as cofactor.

It catalyses the reaction D-sedoheptulose 7-phosphate + D-glyceraldehyde 3-phosphate = aldehydo-D-ribose 5-phosphate + D-xylulose 5-phosphate. It functions in the pathway carbohydrate biosynthesis; Calvin cycle. In terms of biological role, catalyzes the transfer of a two-carbon ketol group from a ketose donor to an aldose acceptor, via a covalent intermediate with the cofactor thiamine pyrophosphate. This chain is Transketolase, plasmid (cbbTP), found in Cupriavidus necator (strain ATCC 17699 / DSM 428 / KCTC 22496 / NCIMB 10442 / H16 / Stanier 337) (Ralstonia eutropha).